The following is a 496-amino-acid chain: COP9 signalosome complex subunit 3 (496 aa).

The region spanning 243–411 (QASHCLGIVI…GNETTTMLRF (169 aa)) is the PCI domain. Residues 468 to 496 (GSSERSGVVGSTEADGGGDLDEDLMGDGR) form a disordered region. Acidic residues predominate over residues 483 to 496 (GGGDLDEDLMGDGR).

It belongs to the CSN3 family. In terms of assembly, component of the COP9 signalosome (CSN) complex.

It localises to the cytoplasm. Its subcellular location is the nucleus. Functionally, component of the COP9 signalosome (CSN) complex that acts as an regulator of the ubiquitin (Ubl) conjugation pathway by mediating the deneddylation of the cullin subunit of SCF-type E3 ubiquitin-protein ligase complexes. The CSN complex seems to link protein degradation to sexual development. The protein is COP9 signalosome complex subunit 3 (csnC) of Emericella nidulans (strain FGSC A4 / ATCC 38163 / CBS 112.46 / NRRL 194 / M139) (Aspergillus nidulans).